A 402-amino-acid polypeptide reads, in one-letter code: Protein prenyltransferase alpha subunit repeat-containing protein 1 (402 aa).

Alanine 2 is subject to N-acetylalanine. 4 PFTA repeats span residues 87–120 (LIDV…LNPI), 122–155 (DLHL…QETS), 180–213 (EMEV…KLDV), and 219–252 (ELSS…SQTV). The disordered stretch occupies residues 263 to 282 (LRSEPALVPPKDEEAAVSTE). Residues 295–328 (EVEFSTDLIDSYPGHETLWCHRRHIFYLQHHLNA) form a PFTA 5 repeat.

This sequence belongs to the protein prenyltransferase subunit alpha family.

This Homo sapiens (Human) protein is Protein prenyltransferase alpha subunit repeat-containing protein 1 (PTAR1).